Reading from the N-terminus, the 799-residue chain is High affinity nerve growth factor receptor (799 aa).

An N-terminal signal peptide occupies residues 1–33; that stretch reads MLRGQRLGQLGWHRPAAGLGSLMTSLMLACASA. At 34–420 the chain is on the extracellular side; that stretch reads ASCREVCCPV…VEKKDETPFG (387 aa). Disulfide bonds link Cys36/Cys41 and Cys40/Cys50. Asn67 carries an N-linked (GlcNAc...) asparagine glycan. 2 LRR repeats span residues 90–113 and 116–137; these read LGELRSLTIVKSGLRFVAPDAFRF and RLSHLNLSSNALESLSWKTVQG. N-linked (GlcNAc...) asparagine glycans are attached at residues Asn121, Asn190, Asn204, Asn255, Asn264, Asn320, Asn325, Asn341, Asn361, and Asn404. The region spanning 148–219 is the LRRCT domain; the sequence is NPLHCSCALF…GDDVFLQCQV (72 aa). Cys154 and Cys193 are joined by a disulfide. Ig-like C2-type domains are found at residues 196–285 and 205–368; these read PTVK…VSVS and DSVE…LAAN. Disulfide bonds link Cys217–Cys267 and Cys302–Cys348. A helical transmembrane segment spans residues 421–441; sequence VSVAVGLAVSAALFLSALLLV. Residues 442-799 are Cytoplasmic-facing; it reads LNKCGQRSKF…APPSYLDVLG (358 aa). The interaction with SQSTM1 stretch occupies residues 472–493; sequence MTLGGSSLSPTEGKGSGLQGHI. Residue Tyr499 is modified to Phosphotyrosine; by autocatalysis. Residues 513-784 enclose the Protein kinase domain; sequence IILKWELGEG…LSMKDVHARL (272 aa). ATP is bound by residues 519–527 and Lys547; that span reads LGEGAFGKV. Asp653 (proton acceptor) is an active-site residue. Phosphotyrosine; by autocatalysis occurs at positions 679, 683, 684, and 794.

Belongs to the protein kinase superfamily. Tyr protein kinase family. Insulin receptor subfamily. As to quaternary structure, exists in a dynamic equilibrium between monomeric (low affinity) and dimeric (high affinity) structures. Homodimerization is induced by binding of a NGF dimer. Found in a complex, at least composed of KIDINS220, MAGI2, NTRK1 and RAPGEF2; the complex is mainly formed at late endosomes in a nerve growth factor (NGF)-dependent manner. Interacts with RAPGEF2; the interaction is strengthened after NGF stimulation. Interacts with SQSTM1; bridges NTRK1 to NGFR. Forms a ternary complex with NGFR and KIDINS220; this complex is affected by the expression levels of KIDINS220 and an increase in KIDINS220 expression leads to a decreased association of NGFR and NTRK1. Interacts (phosphorylated upon activation by NGF) with SHC1; mediates SHC1 phosphorylation and activation. Interacts (phosphorylated upon activation by NGF) with PLCG1; mediates PLCG1 phosphorylation and activation. Interacts (phosphorylated) with SH2B1 and SH2B2. Interacts with GRB2. Interacts with PIK3R1. Interacts with FRS2. Interacts with SORT1; may regulate NTRK1 anterograde axonal transport. Interacts with SH2D1A; regulates NTRK1. Interacts with NRADD. Interacts with RAB7A. Interacts with PTPRS. Interacts with USP36; USP36 does not deubiquitinate NTRK1. Interacts with GGA3. Interacts with TSPAN1; this interaction promotes NTRK1 stability. Ligand-mediated autophosphorylation. Interaction with SQSTM1 is phosphotyrosine-dependent. Autophosphorylation at Tyr-499 mediates interaction and phosphorylation of SHC1. In terms of processing, N-glycosylated. Post-translationally, ubiquitinated. Undergoes polyubiquitination upon activation; regulated by NGFR. Ubiquitination by NEDD4L leads to degradation. Ubiquitination regulates the internalization of the receptor.

It localises to the cell membrane. Its subcellular location is the early endosome membrane. It is found in the late endosome membrane. The protein localises to the recycling endosome membrane. It carries out the reaction L-tyrosyl-[protein] + ATP = O-phospho-L-tyrosyl-[protein] + ADP + H(+). With respect to regulation, the pro-survival signaling effect of NTRK1 in neurons requires its endocytosis into signaling early endosomes and its retrograde axonal transport. This is regulated by different proteins including CFL1, RAC1 and SORT1. NTF3 is unable to induce this signaling probably due to the lability of the NTF3-NTRK1 complex in endosomes. SH2D1A inhibits the autophosphorylation of the receptor, and alters the recruitment and activation of downstream effectors and signaling cascades. Regulated by NGFR. Receptor tyrosine kinase involved in the development and the maturation of the central and peripheral nervous systems through regulation of proliferation, differentiation and survival of sympathetic and nervous neurons. High affinity receptor for NGF which is its primary ligand, it can also bind and be activated by NTF3/neurotrophin-3. However, NTF3 only supports axonal extension through NTRK1 but has no effect on neuron survival. Upon dimeric NGF ligand-binding, undergoes homodimerization, autophosphorylation and activation. Recruits, phosphorylates and/or activates several downstream effectors including SHC1, FRS2, SH2B1, SH2B2 and PLCG1 that regulate distinct overlapping signaling cascades driving cell survival and differentiation. Through SHC1 and FRS2 activates a GRB2-Ras-MAPK cascade that regulates cell differentiation and survival. Through PLCG1 controls NF-Kappa-B activation and the transcription of genes involved in cell survival. Through SHC1 and SH2B1 controls a Ras-PI3 kinase-AKT1 signaling cascade that is also regulating survival. In absence of ligand and activation, may promote cell death, making the survival of neurons dependent on trophic factors. This Mus musculus (Mouse) protein is High affinity nerve growth factor receptor (Ntrk1).